The primary structure comprises 281 residues: UPF0750 membrane protein YvjA (281 aa).

Helical transmembrane passes span 14 to 34 (YVYILIGAAITAVSFNVFLLP), 56 to 76 (AAYVQWIINIPLFIAGVILLG), 77 to 97 (GKFGLKTLAGSVFLPLVVFLT), 108 to 128 (LLAAIFGGVGIGIGIGIVYLG), and 149 to 169 (SLGKCLAIIDGMIVVTAMIVF).

The protein belongs to the UPF0750 family.

The protein resides in the cell membrane. This chain is UPF0750 membrane protein YvjA (yvjA), found in Bacillus subtilis (strain 168).